The sequence spans 194 residues: Large ribosomal subunit protein eL15 (194 aa).

Residues 162–194 (LTSAGRKSRGLRNKGKGAEKVRPSVRANKGKTK) form a disordered region. Residues 167-176 (RKSRGLRNKG) show a composition bias toward basic residues.

Belongs to the eukaryotic ribosomal protein eL15 family.

This Thermococcus onnurineus (strain NA1) protein is Large ribosomal subunit protein eL15.